Reading from the N-terminus, the 371-residue chain is 4-hydroxy-3-methylbut-2-en-1-yl diphosphate synthase (flavodoxin) (371 aa).

Positions 270, 273, 305, and 312 each coordinate [4Fe-4S] cluster.

The protein belongs to the IspG family. [4Fe-4S] cluster is required as a cofactor.

It carries out the reaction (2E)-4-hydroxy-3-methylbut-2-enyl diphosphate + oxidized [flavodoxin] + H2O + 2 H(+) = 2-C-methyl-D-erythritol 2,4-cyclic diphosphate + reduced [flavodoxin]. It functions in the pathway isoprenoid biosynthesis; isopentenyl diphosphate biosynthesis via DXP pathway; isopentenyl diphosphate from 1-deoxy-D-xylulose 5-phosphate: step 5/6. Its function is as follows. Converts 2C-methyl-D-erythritol 2,4-cyclodiphosphate (ME-2,4cPP) into 1-hydroxy-2-methyl-2-(E)-butenyl 4-diphosphate. The protein is 4-hydroxy-3-methylbut-2-en-1-yl diphosphate synthase (flavodoxin) of Shewanella halifaxensis (strain HAW-EB4).